The sequence spans 316 residues: Protein lifeguard 2 (316 aa).

Positions 1–53 (MTQGKLSVANKAPGTEGQQQVHGEKKEAPAVPSAPPSYEEATSGEGMKAGAFP) are disordered. The next 3 membrane-spanning stretches (helical) occupy residues 106 to 126 (VYTI…LFTF), 138 to 158 (PGWY…LACC), and 165 to 185 (FPWN…LTGM). Asn191 carries an N-linked (GlcNAc...) asparagine glycan. Transmembrane regions (helical) follow at residues 194 to 214 (SVLL…VFSF), 225 to 245 (GVLF…AILL), 250 to 270 (VPWL…LFLA), and 290 to 310 (IFGA…FLQL).

Belongs to the BI1 family. LFG subfamily. Interacts with FAS/TNFRSF6 and BAX. As to expression, highly expressed in breast carcinoma tissues. Enhanced expression correlates with the grade of the tumor (grade II/grade III) in primary breast tumors (at protein level). Widely expressed. Expressed at high levels in the brain especially in the hippocampus.

Its subcellular location is the cell membrane. It localises to the membrane raft. The protein resides in the postsynaptic cell membrane. Its function is as follows. Antiapoptotic protein which protects cells uniquely from Fas-induced apoptosis. Regulates Fas-mediated apoptosis in neurons by interfering with caspase-8 activation. May play a role in cerebellar development by affecting cerebellar size, internal granular layer (IGL) thickness, and Purkinje cell (PC) development. The sequence is that of Protein lifeguard 2 (FAIM2) from Homo sapiens (Human).